Here is a 565-residue protein sequence, read N- to C-terminus: Sulfite reductase [NADPH] hemoprotein beta-component (565 aa).

4 residues coordinate [4Fe-4S] cluster: Cys429, Cys435, Cys474, and Cys478. Cys478 is a binding site for siroheme.

This sequence belongs to the nitrite and sulfite reductase 4Fe-4S domain family. Alpha(8)-beta(8). The alpha component is a flavoprotein, the beta component is a hemoprotein. Siroheme is required as a cofactor. [4Fe-4S] cluster serves as cofactor.

It carries out the reaction hydrogen sulfide + 3 NADP(+) + 3 H2O = sulfite + 3 NADPH + 4 H(+). The protein operates within sulfur metabolism; hydrogen sulfide biosynthesis; hydrogen sulfide from sulfite (NADPH route): step 1/1. In terms of biological role, component of the sulfite reductase complex that catalyzes the 6-electron reduction of sulfite to sulfide. This is one of several activities required for the biosynthesis of L-cysteine from sulfate. The polypeptide is Sulfite reductase [NADPH] hemoprotein beta-component (Shewanella halifaxensis (strain HAW-EB4)).